We begin with the raw amino-acid sequence, 113 residues long: Large ribosomal subunit protein uL22 (113 aa).

It belongs to the universal ribosomal protein uL22 family. In terms of assembly, part of the 50S ribosomal subunit.

Its function is as follows. This protein binds specifically to 23S rRNA; its binding is stimulated by other ribosomal proteins, e.g. L4, L17, and L20. It is important during the early stages of 50S assembly. It makes multiple contacts with different domains of the 23S rRNA in the assembled 50S subunit and ribosome. The globular domain of the protein is located near the polypeptide exit tunnel on the outside of the subunit, while an extended beta-hairpin is found that lines the wall of the exit tunnel in the center of the 70S ribosome. The polypeptide is Large ribosomal subunit protein uL22 (Carboxydothermus hydrogenoformans (strain ATCC BAA-161 / DSM 6008 / Z-2901)).